The sequence spans 312 residues: tRNA-dihydrouridine(16) synthase (312 aa).

FMN-binding positions include 7-9 (PMQ) and Q68. The active-site Proton donor is C98. FMN contacts are provided by residues K139, 200–202 (NGE), and 224–225 (GR).

The protein belongs to the Dus family. DusC subfamily. FMN is required as a cofactor.

It catalyses the reaction 5,6-dihydrouridine(16) in tRNA + NADP(+) = uridine(16) in tRNA + NADPH + H(+). It carries out the reaction 5,6-dihydrouridine(16) in tRNA + NAD(+) = uridine(16) in tRNA + NADH + H(+). Its function is as follows. Catalyzes the synthesis of 5,6-dihydrouridine (D), a modified base found in the D-loop of most tRNAs, via the reduction of the C5-C6 double bond in target uridines. Specifically modifies U16 in tRNAs. In Pasteurella multocida (strain Pm70), this protein is tRNA-dihydrouridine(16) synthase.